Consider the following 666-residue polypeptide: N-acetylgalactosaminyltransferase 6 (666 aa).

The Cytoplasmic segment spans residues 1 to 11 (MRRPNLKWIVK). A helical; Signal-anchor for type II membrane protein membrane pass occupies residues 12–31 (ASLLLLISLTLFVLITSWIS). Topologically, residues 32-666 (STPYTNKPVH…NYSQDLVLSL (635 aa)) are lumenal. The disordered stretch occupies residues 90–126 (EPVEEEVDNPHPADDEPQQQPQEELQMAAPADASVKK). The span at 107–120 (QQQPQEELQMAAPA) shows a compositional bias: low complexity. Asn181 carries an N-linked (GlcNAc...) asparagine glycan. 5 disulfides stabilise this stretch: Cys192-Cys421, Cys412-Cys491, Cys531-Cys548, Cys577-Cys594, and Cys621-Cys636. The segment at 201–311 (LPTVSVIIIF…YNWLPPLLEP (111 aa)) is catalytic subdomain A. Asp242 and Arg272 together coordinate substrate. Asn285 is a glycosylation site (N-linked (GlcNAc...) asparagine). Asp295 provides a ligand contact to Mn(2+). Residue Ser296 coordinates substrate. His297 contributes to the Mn(2+) binding site. The tract at residues 367-429 (PFKSPIMAGG…PCSRIGHIYR (63 aa)) is catalytic subdomain B. Residue Trp398 coordinates substrate. Mn(2+) is bound at residue His426. Position 429 (Arg429) interacts with substrate. The region spanning 518–648 (AMGALQNVGN…DNRFQQWNFG (131 aa)) is the Ricin B-type lectin domain. N-linked (GlcNAc...) asparagine glycans are attached at residues Asn651 and Asn657.

This sequence belongs to the glycosyltransferase 2 family. GalNAc-T subfamily. Mn(2+) is required as a cofactor. As to expression, expressed during oogenesis, in the somatically derived follicle cells that surround the developing oocyte, which are involved in the maturation of the oocyte and construction of the egg shell, as well as playing a role in subsequent embryonic pattern formation. Expressed in the salivary glands from embryonic stage 12 onwards, becoming stronger at stage 13. During embryonic stages 12-13, also expressed in the posterior midgut and hindgut. During embryonic stages 14-15, expression continues in the hindgut. Expression is detected in the epidermis and antennomaxillary complex during embryonic stages 16-17. In third instar larvae, ubiquitously expressed in wing, eye-antennal, leg and haltere imaginal disks.

The protein localises to the golgi apparatus membrane. The catalysed reaction is L-seryl-[protein] + UDP-N-acetyl-alpha-D-galactosamine = a 3-O-[N-acetyl-alpha-D-galactosaminyl]-L-seryl-[protein] + UDP + H(+). The enzyme catalyses L-threonyl-[protein] + UDP-N-acetyl-alpha-D-galactosamine = a 3-O-[N-acetyl-alpha-D-galactosaminyl]-L-threonyl-[protein] + UDP + H(+). It participates in protein modification; protein glycosylation. Glycopeptide transferase involved in O-linked oligosaccharide biosynthesis, which catalyzes the transfer of an N-acetyl-D-galactosamine residue to an already glycosylated peptide. In contrast to other proteins of the family, it does not act as a peptide transferase that transfers GalNAc onto serine or threonine residue on the protein receptor, but instead requires the prior addition of a GalNAc on a peptide before adding additional GalNAc moieties. Some peptide transferase activity is however not excluded, considering that its appropriate peptide substrate may remain unidentified. Prefers the diglycosylated Muc5AC-3/13 as substrate. Might have a role in protein O-glycosylation in the Golgi and thereby in establishing and/or maintaining a proper secretory apparatus structure. In Drosophila melanogaster (Fruit fly), this protein is N-acetylgalactosaminyltransferase 6.